We begin with the raw amino-acid sequence, 205 residues long: Small ribosomal subunit protein uS4 (205 aa).

Residues 1–16 (MSKRESSKYKIDRRMG) are compositionally biased toward basic and acidic residues. The disordered stretch occupies residues 1-46 (MSKRESSKYKIDRRMGENIWGRPKSPVNRREYGPGQHGQRRKSKLS). In terms of domain architecture, S4 RNA-binding spans 94 to 157 (SRLDAIVYRA…KQLVSVLESV (64 aa)).

Belongs to the universal ribosomal protein uS4 family. In terms of assembly, part of the 30S ribosomal subunit. Contacts protein S5. The interaction surface between S4 and S5 is involved in control of translational fidelity.

Functionally, one of the primary rRNA binding proteins, it binds directly to 16S rRNA where it nucleates assembly of the body of the 30S subunit. In terms of biological role, with S5 and S12 plays an important role in translational accuracy. This chain is Small ribosomal subunit protein uS4, found in Sinorhizobium fredii (strain NBRC 101917 / NGR234).